The sequence spans 667 residues: Phosphomethylpyrimidine synthase (667 aa).

Substrate is bound by residues N235, M264, Y293, H329, 349–351 (SRG), 390–393 (DGMR), and E429. H433 contributes to the Zn(2+) binding site. Y456 serves as a coordination point for substrate. H497 provides a ligand contact to Zn(2+). 3 residues coordinate [4Fe-4S] cluster: C577, C580, and C585. Residues 618–642 (DSYTGSESDTAKRASQREQGMAQMS) are disordered.

Belongs to the ThiC family. In terms of assembly, homodimer. It depends on [4Fe-4S] cluster as a cofactor.

It catalyses the reaction 5-amino-1-(5-phospho-beta-D-ribosyl)imidazole + S-adenosyl-L-methionine = 4-amino-2-methyl-5-(phosphooxymethyl)pyrimidine + CO + 5'-deoxyadenosine + formate + L-methionine + 3 H(+). It participates in cofactor biosynthesis; thiamine diphosphate biosynthesis. In terms of biological role, catalyzes the synthesis of the hydroxymethylpyrimidine phosphate (HMP-P) moiety of thiamine from aminoimidazole ribotide (AIR) in a radical S-adenosyl-L-methionine (SAM)-dependent reaction. This chain is Phosphomethylpyrimidine synthase, found in Shewanella pealeana (strain ATCC 700345 / ANG-SQ1).